The following is a 118-amino-acid chain: Small ribosomal subunit protein uS13 (118 aa).

The interval 91–118 (HRRSLPLRGQRTKNNARTRKGPKKPIKR) is disordered.

The protein belongs to the universal ribosomal protein uS13 family. In terms of assembly, part of the 30S ribosomal subunit. Forms a loose heterodimer with protein S19. Forms two bridges to the 50S subunit in the 70S ribosome.

Its function is as follows. Located at the top of the head of the 30S subunit, it contacts several helices of the 16S rRNA. In the 70S ribosome it contacts the 23S rRNA (bridge B1a) and protein L5 of the 50S subunit (bridge B1b), connecting the 2 subunits; these bridges are implicated in subunit movement. Contacts the tRNAs in the A and P-sites. The chain is Small ribosomal subunit protein uS13 from Hydrogenovibrio crunogenus (strain DSM 25203 / XCL-2) (Thiomicrospira crunogena).